A 403-amino-acid polypeptide reads, in one-letter code: Argininosuccinate synthase 1 (403 aa).

ATP contacts are provided by residues 10 to 18 (SYSGGLDTS) and A37. 2 residues coordinate L-citrulline: Y88 and S93. G118 provides a ligand contact to ATP. T120, N124, and D125 together coordinate L-aspartate. L-citrulline is bound at residue N124. L-citrulline-binding residues include R128, S179, S188, E264, and Y276.

It belongs to the argininosuccinate synthase family. Type 1 subfamily. As to quaternary structure, homotetramer.

Its subcellular location is the cytoplasm. The catalysed reaction is L-citrulline + L-aspartate + ATP = 2-(N(omega)-L-arginino)succinate + AMP + diphosphate + H(+). It participates in amino-acid biosynthesis; L-arginine biosynthesis; L-arginine from L-ornithine and carbamoyl phosphate: step 2/3. The polypeptide is Argininosuccinate synthase 1 (Rhizobium johnstonii (strain DSM 114642 / LMG 32736 / 3841) (Rhizobium leguminosarum bv. viciae)).